Consider the following 344-residue polypeptide: Zinc transporter 9 (344 aa).

The chain crosses the membrane as a helical span at residues M1–L21. Topologically, residues P22 to G30 are cytoplasmic. A helical transmembrane segment spans residues A31 to G51. Topologically, residues S52 to E72 are extracellular. The helical transmembrane segment at F73–Y93 threads the bilayer. Topologically, residues E94 to H188 are cytoplasmic. A helical membrane pass occupies residues V189–S209. The Extracellular segment spans residues L210 to P221. Residues L222–A242 form a helical membrane-spanning segment. Residues E243–S251 lie on the Cytoplasmic side of the membrane. Residues A252–I272 traverse the membrane as a helical segment. The Extracellular portion of the chain corresponds to A273–D291. The helical transmembrane segment at S292–L312 threads the bilayer. Topologically, residues S313–Q323 are cytoplasmic. The helical transmembrane segment at V324–A344 threads the bilayer.

This sequence belongs to the ZIP transporter (TC 2.A.5) family.

Its subcellular location is the cell membrane. In terms of biological role, zinc transporter involved in zinc uptake in roots. Targeted by BZIP19 transcription factor in response to zinc-deficient conditions. The polypeptide is Zinc transporter 9 (ZIP9) (Arabidopsis thaliana (Mouse-ear cress)).